The sequence spans 317 residues: Adenosine receptor A3 (317 aa).

Residues 1–14 are Extracellular-facing; that stretch reads MPVNSTAVSWTSVT. Residue Asn4 is glycosylated (N-linked (GlcNAc...) asparagine). The chain crosses the membrane as a helical span at residues 15–37; that stretch reads YITVEILIGLCAIVGNVLVIWVV. Residues 38–48 are Cytoplasmic-facing; that stretch reads KLNPSLQTTTF. The helical transmembrane segment at 49–72 threads the bilayer; the sequence is YFIVSLALADIAVGVLVMPLAIVI. The Extracellular portion of the chain corresponds to 73-84; that stretch reads SLGVTIHFYSCL. A disulfide bridge connects residues Cys83 and Cys165. A helical transmembrane segment spans residues 85 to 106; it reads FMTCLMLIFTHASIMSLLAIAV. The Cytoplasmic segment spans residues 107–126; it reads DRYLRVKLTVRYRRVTTQRR. Residues 127–148 traverse the membrane as a helical segment; the sequence is IWLALGLCWLVSFLVGLTPMFG. Over 149–176 the chain is Extracellular; that stretch reads WNMKLSSADENLTFLPCRFRSVMRMDYM. N-linked (GlcNAc...) asparagine glycosylation is present at Asn159. Residues 177-197 traverse the membrane as a helical segment; that stretch reads VYFSFFLWILVPLVVMCAIYF. Over 198–230 the chain is Cytoplasmic; that stretch reads DIFYIIRNRLSQSFSGSRETGAFYGREFKTAKS. The helical transmembrane segment at 231–254 threads the bilayer; the sequence is LLLVLFLFALCWLPLSIINCILYF. The Extracellular portion of the chain corresponds to 255–260; sequence DGQVPQ. The chain crosses the membrane as a helical span at residues 261–283; that stretch reads TVLYLGILLSHANSMMNPIVYAY. Residues 284–317 lie on the Cytoplasmic side of the membrane; that stretch reads KIKKFKETYLLILKACVMCQPSKSMDPSTEQTSE. Cys302 carries S-palmitoyl cysteine lipidation.

It belongs to the G-protein coupled receptor 1 family. In terms of processing, phosphorylation on Thr-315 and Ser-316 may be crucial for rapid desensitization. Phosphorylation on Thr-315 may be necessary for phosphorylation on Ser-316 to occur. Most abundant in lung, spleen and pineal gland. Moderate expression in brain, kidney and testis.

Its subcellular location is the cell membrane. Its function is as follows. Receptor for adenosine. The activity of this receptor is mediated by G proteins which inhibits adenylyl cyclase. The protein is Adenosine receptor A3 (ADORA3) of Ovis aries (Sheep).